The primary structure comprises 315 residues: Methionyl-tRNA formyltransferase (315 aa).

113 to 116 contributes to the (6S)-5,6,7,8-tetrahydrofolate binding site; that stretch reads SILP.

Belongs to the Fmt family.

It catalyses the reaction L-methionyl-tRNA(fMet) + (6R)-10-formyltetrahydrofolate = N-formyl-L-methionyl-tRNA(fMet) + (6S)-5,6,7,8-tetrahydrofolate + H(+). Attaches a formyl group to the free amino group of methionyl-tRNA(fMet). The formyl group appears to play a dual role in the initiator identity of N-formylmethionyl-tRNA by promoting its recognition by IF2 and preventing the misappropriation of this tRNA by the elongation apparatus. The sequence is that of Methionyl-tRNA formyltransferase from Vibrio parahaemolyticus serotype O3:K6 (strain RIMD 2210633).